Consider the following 326-residue polypeptide: PDZ domain-containing protein MAGIX (326 aa).

The tract at residues 1–32 (MDSHAGNTADPRGSRRGVGLQGSGSPRARQLL) is disordered. The region spanning 128–212 (SVELVRGPAG…RLCLVLQRPQ (85 aa)) is the PDZ domain. The tract at residues 214–267 (MNGSRSKEVGGGHQKTDRIPDPRGGRMMESRGTISPVHHRPKTRTGPGPSPESV) is disordered. A compositionally biased stretch (basic and acidic residues) spans 218–242 (RSKEVGGGHQKTDRIPDPRGGRMME). Phosphoserine is present on serine 263.

The chain is PDZ domain-containing protein MAGIX (Magix) from Rattus norvegicus (Rat).